The chain runs to 338 residues: 1-aminocyclopropane-1-carboxylate deaminase (338 aa).

K51 is subject to N6-(pyridoxal phosphate)lysine. The active-site Nucleophile is S78.

It belongs to the ACC deaminase/D-cysteine desulfhydrase family. In terms of assembly, homotrimer. Pyridoxal 5'-phosphate serves as cofactor.

It catalyses the reaction 1-aminocyclopropane-1-carboxylate + H2O = 2-oxobutanoate + NH4(+). Its function is as follows. Catalyzes a cyclopropane ring-opening reaction, the irreversible conversion of 1-aminocyclopropane-1-carboxylate (ACC) to ammonia and alpha-ketobutyrate. Allows growth on ACC as a nitrogen source. This chain is 1-aminocyclopropane-1-carboxylate deaminase, found in Variovorax paradoxus.